The chain runs to 352 residues: Phosphatase Herzog (352 aa).

A prion-like domain necessary for both protein assembly and membrane targeting region spans residues 1–102; the sequence is MDATSIITQV…PLPDQQRYLL (102 aa). Positions 103–267 are mediates substrate recognition; it reads PQVRLTDMHR…ELIPLFEKLS (165 aa). The region spanning 108-266 is the FCP1 homology domain; it reads TDMHRKCMVI…RELIPLFEKL (159 aa). Disordered regions lie at residues 284–310 and 332–352; these read NNQTNQQQHPQELQQAPNQLHQQLQQQ and TMLNQQQTSPPSPQSELLQKT.

In terms of assembly, monomer. Forms higher-order protein aggregates with amyloid-like features during gastrulation. Interacts with babo, dah, Irk1, pch2, Ras64B, sax and Src64B.

The protein resides in the cell membrane. The catalysed reaction is O-phospho-L-seryl-[protein] + H2O = L-seryl-[protein] + phosphate. Phosphatase activity requires amyloid-like aggregation on the membrane. Prion-like membrane-associated phosphatase. Phosphatase activity depends on amyloid-like assembly at the membrane. Might have a role in establishment of segment polarity in embryos. This is Phosphatase Herzog from Drosophila melanogaster (Fruit fly).